The following is a 301-amino-acid chain: Sulfate adenylyltransferase subunit 2 (301 aa).

It belongs to the PAPS reductase family. CysD subfamily. In terms of assembly, heterodimer composed of CysD, the smaller subunit, and CysN.

It carries out the reaction sulfate + ATP + H(+) = adenosine 5'-phosphosulfate + diphosphate. Its pathway is sulfur metabolism; hydrogen sulfide biosynthesis; sulfite from sulfate: step 1/3. With CysN forms the ATP sulfurylase (ATPS) that catalyzes the adenylation of sulfate producing adenosine 5'-phosphosulfate (APS) and diphosphate, the first enzymatic step in sulfur assimilation pathway. APS synthesis involves the formation of a high-energy phosphoric-sulfuric acid anhydride bond driven by GTP hydrolysis by CysN coupled to ATP hydrolysis by CysD. This chain is Sulfate adenylyltransferase subunit 2, found in Trichlorobacter lovleyi (strain ATCC BAA-1151 / DSM 17278 / SZ) (Geobacter lovleyi).